Reading from the N-terminus, the 485-residue chain is Glutamyl-tRNA(Gln) amidotransferase subunit A (485 aa).

Catalysis depends on charge relay system residues Lys-78 and Ser-153. The Acyl-ester intermediate role is filled by Ser-177.

The protein belongs to the amidase family. GatA subfamily. In terms of assembly, heterotrimer of A, B and C subunits.

It catalyses the reaction L-glutamyl-tRNA(Gln) + L-glutamine + ATP + H2O = L-glutaminyl-tRNA(Gln) + L-glutamate + ADP + phosphate + H(+). Allows the formation of correctly charged Gln-tRNA(Gln) through the transamidation of misacylated Glu-tRNA(Gln) in organisms which lack glutaminyl-tRNA synthetase. The reaction takes place in the presence of glutamine and ATP through an activated gamma-phospho-Glu-tRNA(Gln). This is Glutamyl-tRNA(Gln) amidotransferase subunit A from Bacillus cereus (strain Q1).